A 257-amino-acid polypeptide reads, in one-letter code: 3-methyl-2-oxobutanoate hydroxymethyltransferase (257 aa).

2 residues coordinate Mg(2+): Asp-44 and Asp-83. 3-methyl-2-oxobutanoate-binding positions include 44–45 (DS), Asp-83, and Lys-113. Glu-115 lines the Mg(2+) pocket. Glu-182 serves as the catalytic Proton acceptor.

This sequence belongs to the PanB family. As to quaternary structure, homodecamer; pentamer of dimers. Mg(2+) is required as a cofactor.

It localises to the cytoplasm. The catalysed reaction is 3-methyl-2-oxobutanoate + (6R)-5,10-methylene-5,6,7,8-tetrahydrofolate + H2O = 2-dehydropantoate + (6S)-5,6,7,8-tetrahydrofolate. The protein operates within cofactor biosynthesis; (R)-pantothenate biosynthesis; (R)-pantoate from 3-methyl-2-oxobutanoate: step 1/2. Catalyzes the reversible reaction in which hydroxymethyl group from 5,10-methylenetetrahydrofolate is transferred onto alpha-ketoisovalerate to form ketopantoate. The polypeptide is 3-methyl-2-oxobutanoate hydroxymethyltransferase (Rippkaea orientalis (strain PCC 8801 / RF-1) (Cyanothece sp. (strain PCC 8801))).